The sequence spans 125 residues: DQDCLPGWSYFEKYCYKVFQVKKNWEDAEKFCTEEVKDGHLISLHSNEEVEFMTSLAFPILKYDIVWMGLRNFWRDCPWKWSDDAKLDYKAWSDEPNCYGAMTTDYQWLRWNCNDPRYFVCKSPA.

Disulfide bonds link Cys-4-Cys-15, Cys-32-Cys-121, and Cys-98-Cys-113. The 112-residue stretch at 11-122 folds into the C-type lectin domain; that stretch reads FEKYCYKVFQ…CNDPRYFVCK (112 aa).

Belongs to the snaclec family. As to quaternary structure, heterodimer of subunits alpha and beta; disulfide-linked. In terms of tissue distribution, expressed by the venom gland.

Its subcellular location is the secreted. In terms of biological role, inhibits integrin alpha-2/beta-1- (ITGA2/ITGB1) dependent melanoma metastasis. In Daboia palaestinae (Palestine viper), this protein is Snaclec VP12 subunit B.